Consider the following 503-residue polypeptide: UDP-N-acetylmuramate--L-alanine ligase (503 aa).

120–126 is a binding site for ATP; it reads GTHGKTS.

The protein belongs to the MurCDEF family.

It localises to the cytoplasm. It catalyses the reaction UDP-N-acetyl-alpha-D-muramate + L-alanine + ATP = UDP-N-acetyl-alpha-D-muramoyl-L-alanine + ADP + phosphate + H(+). The protein operates within cell wall biogenesis; peptidoglycan biosynthesis. Functionally, cell wall formation. In Rhodococcus opacus (strain B4), this protein is UDP-N-acetylmuramate--L-alanine ligase.